Consider the following 1063-residue polypeptide: DNA-directed RNA polymerase subunit beta (1063 aa).

It belongs to the RNA polymerase beta chain family. In terms of assembly, in plastids the minimal PEP RNA polymerase catalytic core is composed of four subunits: alpha, beta, beta', and beta''. When a (nuclear-encoded) sigma factor is associated with the core the holoenzyme is formed, which can initiate transcription.

Its subcellular location is the plastid. The protein localises to the chloroplast. It carries out the reaction RNA(n) + a ribonucleoside 5'-triphosphate = RNA(n+1) + diphosphate. In terms of biological role, DNA-dependent RNA polymerase catalyzes the transcription of DNA into RNA using the four ribonucleoside triphosphates as substrates. This chain is DNA-directed RNA polymerase subunit beta, found in Zygnema circumcarinatum (Green alga).